Here is a 344-residue protein sequence, read N- to C-terminus: Heat-inducible transcription repressor HrcA (344 aa).

Belongs to the HrcA family.

In terms of biological role, negative regulator of class I heat shock genes (grpE-dnaK-dnaJ and groELS operons). Prevents heat-shock induction of these operons. The protein is Heat-inducible transcription repressor HrcA of Geobacillus kaustophilus (strain HTA426).